Reading from the N-terminus, the 293-residue chain is MKLSSILYVSVLAHLVMSKNVIDLDSFKESLHEEDHDKRDGKNVIDLEQFEASTQQEQNEKREAKNVYNLQSLKEDHIGENEKREAKNVYNLQSLKEGLDDENDKREGNVNKPEVSEEGSNKGDKRSMQNVIDIQEQDTHQNLLQSILPQLQSITIFTGYIRDDPELAMKTADSKQSMIIIAPSDDSISSKLNNLKPWEFPNELTGNSDDDRIVSENLKNFLNGHVIVDFKDKFVTSNDEIIANLVNGKQVKIKQEGSDKFKISTGDKWIKVETVKQVDNGYIFVINDVLVKP.

The signal sequence occupies residues 1–18 (MKLSSILYVSVLAHLVMS). A compositionally biased stretch (basic and acidic residues) spans 76–87 (DHIGENEKREAK). Positions 76–126 (DHIGENEKREAKNVYNLQSLKEGLDDENDKREGNVNKPEVSEEGSNKGDKR) are disordered. The FAS1 domain occupies 141–290 (QNLLQSILPQ…GYIFVINDVL (150 aa)).

The protein resides in the vacuole. This Debaryomyces hansenii (strain ATCC 36239 / CBS 767 / BCRC 21394 / JCM 1990 / NBRC 0083 / IGC 2968) (Yeast) protein is FAS1 domain-containing protein DEHA2G15708g.